Here is a 108-residue protein sequence, read N- to C-terminus: Structural protein 1 (108 aa).

Residues 1–77 (MSRVSEYGVP…LKMQMDRLCN (77 aa)) lie on the Intravirion side of the membrane. The chain crosses the membrane as a helical; Signal-anchor for type II membrane protein span at residues 78-98 (VLGVVLQMATLALVTYIAFVV). Residues 99–108 (HTRATSCKRE) lie on the Virion surface side of the membrane.

The protein belongs to the varicellovirus ORF1 protein family. In terms of assembly, homodimer. Phosphorylated.

The protein resides in the virion membrane. The protein localises to the host Golgi apparatus membrane. In Homo sapiens (Human), this protein is Structural protein 1.